The following is a 957-amino-acid chain: SH3 domain-binding protein 4-B (957 aa).

The SH3 1 domain maps to 54–113; sequence ENVKEVVAIKDYCPNNFTTLKFSKGEHLYVLDASGGDWWYAHNTTEMGYIPSSYVQPLNY. Positions 312–449 constitute a ZU5 domain; sequence TSIVCRLDSS…LEPVMYVVMV (138 aa). Positions 649–719 constitute an SH3 2 domain; sequence TSLKYGKLIK…HAKNVLVVGK (71 aa).

Homodimer or homooligomer.

Its subcellular location is the membrane. It is found in the clathrin-coated pit. The protein resides in the cytoplasmic vesicle. The protein localises to the clathrin-coated vesicle. It localises to the nucleus. In terms of biological role, possible role in regulating endocytosis of the transferrin receptor at the plasma membrane. Alternatively, may function as a negative regulator of the amino acid-induced TOR signaling by inhibiting the formation of active Rag GTPase complexes. Preferentially binds inactive Rag GTPase complexes and prevents their interaction with the mTORC1 complex inhibiting its relocalization to lysosomes and its activation. Thereby, may indirectly regulate cell growth, proliferation and autophagy. This Xenopus laevis (African clawed frog) protein is SH3 domain-binding protein 4-B (sh3bp4-b).